A 292-amino-acid polypeptide reads, in one-letter code: MSELSAEEKRKLLRERRQAKMAQGKATDRLNNILSQGSSVKSSNVTSVLDKPEKATTTVMDLPSRETQSPTPLHDDPEVPDITSLLKEKENEAPDMEAMLQQILGGSGAHTGPGNDGGANFLQEMMKAMAEDPSGGSTAEESSYQSQLSQYHAYEQKQWKARFLVVRWIIHTLNFVYHYIASGYKLSASPYAFVRAQAVDSHVRTFFTAFLTVEVAVISAYFLVMSQPKFKDFSRENLVSRILSMASAVVPAVGRYQPLVTRALVYWNGASIFVGDLMLMVFYFGITSVLGN.

The span at 1 to 18 shows a compositional bias: basic and acidic residues; the sequence is MSELSAEEKRKLLRERRQ. Positions 1 to 80 are disordered; sequence MSELSAEEKR…TPLHDDPEVP (80 aa). Over 1 to 158 the chain is Cytoplasmic; that stretch reads MSELSAEEKR…SQYHAYEQKQ (158 aa). Composition is skewed to polar residues over residues 29 to 47 and 55 to 71; these read RLNNILSQGSSVKSSNVTS and ATTTVMDLPSRETQSPT. A helical transmembrane segment spans residues 159–179; sequence WKARFLVVRWIIHTLNFVYHY. The Lumenal portion of the chain corresponds to 180–205; sequence IASGYKLSASPYAFVRAQAVDSHVRT. Residues 206–225 form a helical membrane-spanning segment; sequence FFTAFLTVEVAVISAYFLVM. The Cytoplasmic portion of the chain corresponds to 226–268; that stretch reads SQPKFKDFSRENLVSRILSMASAVVPAVGRYQPLVTRALVYWN. Residues 269-289 traverse the membrane as a helical segment; sequence GASIFVGDLMLMVFYFGITSV. Topologically, residues 290–292 are lumenal; it reads LGN.

The protein belongs to the GET2 family. As to quaternary structure, component of the Golgi to ER traffic (GET) complex, which is composed of GET1, GET2 and GET3. Within the complex, GET1 and GET2 form a heterotetramer which is stabilized by phosphatidylinositol binding and which binds to the GET3 homodimer.

It is found in the endoplasmic reticulum membrane. The protein resides in the golgi apparatus membrane. Required for the post-translational delivery of tail-anchored (TA) proteins to the endoplasmic reticulum. Together with GET1, acts as a membrane receptor for soluble GET3, which recognizes and selectively binds the transmembrane domain of TA proteins in the cytosol. The GET complex cooperates with the HDEL receptor ERD2 to mediate the ATP-dependent retrieval of resident ER proteins that contain a C-terminal H-D-E-L retention signal from the Golgi to the ER. The protein is Golgi to ER traffic protein 2 of Clavispora lusitaniae (strain ATCC 42720) (Yeast).